We begin with the raw amino-acid sequence, 269 residues long: 3-methyl-2-oxobutanoate hydroxymethyltransferase (269 aa).

Mg(2+) contacts are provided by Asp-43 and Asp-82. 3-methyl-2-oxobutanoate is bound by residues 43-44, Asp-82, and Lys-110; that span reads DS. Glu-112 serves as a coordination point for Mg(2+). Glu-179 serves as the catalytic Proton acceptor.

This sequence belongs to the PanB family. As to quaternary structure, homodecamer; pentamer of dimers. Mg(2+) is required as a cofactor.

Its subcellular location is the cytoplasm. It catalyses the reaction 3-methyl-2-oxobutanoate + (6R)-5,10-methylene-5,6,7,8-tetrahydrofolate + H2O = 2-dehydropantoate + (6S)-5,6,7,8-tetrahydrofolate. It participates in cofactor biosynthesis; (R)-pantothenate biosynthesis; (R)-pantoate from 3-methyl-2-oxobutanoate: step 1/2. Catalyzes the reversible reaction in which hydroxymethyl group from 5,10-methylenetetrahydrofolate is transferred onto alpha-ketoisovalerate to form ketopantoate. In Acinetobacter baumannii (strain AB307-0294), this protein is 3-methyl-2-oxobutanoate hydroxymethyltransferase.